A 142-amino-acid chain; its full sequence is Hemoglobin subunit alpha-A (142 aa).

Positions 2 to 142 (VLSAADKTNV…VGAVLTAKYR (141 aa)) constitute a Globin domain. His59 contacts O2. Residue His88 coordinates heme b.

Belongs to the globin family. Heterotetramer of two alpha chains and two beta chains. As to expression, red blood cells.

Functionally, involved in oxygen transport from the lung to the various peripheral tissues. The polypeptide is Hemoglobin subunit alpha-A (HBAA) (Anas platyrhynchos (Mallard)).